The primary structure comprises 100 residues: UPF0213 protein YhbQ (100 aa).

One can recognise a GIY-YIG domain in the interval 2–77 (TPWFLYLIRT…KQLTKRQKER (76 aa)).

The protein belongs to the UPF0213 family.

The polypeptide is UPF0213 protein YhbQ (Escherichia coli O157:H7).